A 548-amino-acid chain; its full sequence is Chaperonin GroEL 3 (548 aa).

Residues 30–33 (TLGP), lysine 51, 87–91 (DGTTT), glycine 415, and aspartate 496 contribute to the ATP site.

Belongs to the chaperonin (HSP60) family. Forms a cylinder of 14 subunits composed of two heptameric rings stacked back-to-back. Interacts with the co-chaperonin GroES.

The protein resides in the cytoplasm. The enzyme catalyses ATP + H2O + a folded polypeptide = ADP + phosphate + an unfolded polypeptide.. Functionally, together with its co-chaperonin GroES, plays an essential role in assisting protein folding. The GroEL-GroES system forms a nano-cage that allows encapsulation of the non-native substrate proteins and provides a physical environment optimized to promote and accelerate protein folding. This Nitrobacter winogradskyi (strain ATCC 25391 / DSM 10237 / CIP 104748 / NCIMB 11846 / Nb-255) protein is Chaperonin GroEL 3.